Here is a 144-residue protein sequence, read N- to C-terminus: Large ribosomal subunit protein uL11 (144 aa).

The protein belongs to the universal ribosomal protein uL11 family. As to quaternary structure, part of the ribosomal stalk of the 50S ribosomal subunit. Interacts with L10 and the large rRNA to form the base of the stalk. L10 forms an elongated spine to which L12 dimers bind in a sequential fashion forming a multimeric L10(L12)X complex. In terms of processing, one or more lysine residues are methylated.

Its function is as follows. Forms part of the ribosomal stalk which helps the ribosome interact with GTP-bound translation factors. This Streptomyces avermitilis (strain ATCC 31267 / DSM 46492 / JCM 5070 / NBRC 14893 / NCIMB 12804 / NRRL 8165 / MA-4680) protein is Large ribosomal subunit protein uL11.